A 217-amino-acid polypeptide reads, in one-letter code: Orotidine 5'-phosphate decarboxylase (217 aa).

Residues Asp14, Lys36, Asp64–Thr73, Ser120, Pro172–Ser182, Gly197, and Arg198 each bind substrate. Lys66 functions as the Proton donor in the catalytic mechanism.

The protein belongs to the OMP decarboxylase family. Type 1 subfamily. As to quaternary structure, homodimer.

It catalyses the reaction orotidine 5'-phosphate + H(+) = UMP + CO2. The protein operates within pyrimidine metabolism; UMP biosynthesis via de novo pathway; UMP from orotate: step 2/2. Its function is as follows. Catalyzes the decarboxylation of orotidine 5'-monophosphate (OMP) to uridine 5'-monophosphate (UMP). The polypeptide is Orotidine 5'-phosphate decarboxylase (Methanococcus maripaludis (strain C6 / ATCC BAA-1332)).